The primary structure comprises 323 residues: Aquaporin-2 (323 aa).

A run of 3 helical transmembrane segments spans residues 32–54 (FLAVFVLMVFTEGCSASAIFTHR), 74–96 (YVAGGVTGAFLNPAIAVAFSVLG), and 103–123 (CFCYMIAQYLGAFLASLAIYA). Residues 85-87 (NPA) carry the NPA 1 motif. A glycan (N-linked (GlcNAc...) asparagine) is linked at asparagine 143. The next 2 membrane-spanning stretches (helical) occupy residues 161–181 (GAFVDQVFGTALLIIVVLSMV) and 193–213 (FPIAIGLLIVVLDISLAYNAG). Residues 217–219 (NPS) carry the NPA 2 motif. A helical transmembrane segment spans residues 243 to 263 (YTWFFVPVVGSHAGAIVGAVI). Asparagine 292 carries N-linked (GlcNAc...) asparagine glycosylation.

This sequence belongs to the MIP/aquaporin (TC 1.A.8) family.

The protein localises to the cell membrane. It carries out the reaction H2O(in) = H2O(out). It catalyses the reaction glycerol(in) = glycerol(out). Functionally, aquaglyceroporin that may modulate the water content and osmolytes during anhydrobiosis. The chain is Aquaporin-2 from Milnesium tardigradum (Water bear).